Consider the following 576-residue polypeptide: uncharacterized protein (576 aa).

The first 28 residues, 1–28, serve as a signal peptide directing secretion; it reads MLRLNGLRVLLRTLAAIGALLTTASASA. S185 functions as the Acyl-ester intermediate in the catalytic mechanism. Disulfide bonds link C252/C269 and C278/C286. Ca(2+) is bound by residues D253, D256, D260, and V262. Catalysis depends on charge relay system residues D414 and H464. A disulfide bridge connects residues C529 and C551.

It belongs to the tannase family.

This is an uncharacterized protein from Xanthomonas campestris pv. campestris (strain ATCC 33913 / DSM 3586 / NCPPB 528 / LMG 568 / P 25).